We begin with the raw amino-acid sequence, 126 residues long: Mating-type protein A1 (126 aa).

Positions 70–126 (SPKGKSSISPQARAFLEQVFRRKQSLNSKEKEEVAKKCGITPLQVRVWFINKRMRSK) form a DNA-binding region, homeobox.

The protein belongs to the MATA1 family. As to quaternary structure, binds DNA with a high specificity as a heterodimer of A1 and ALPHA2.

Its subcellular location is the nucleus. In terms of biological role, mating type proteins are sequence specific DNA-binding proteins that act as master switches in yeast differentiation by controlling gene expression in a cell type-specific fashion. Transcriptional corepressor that, in a/alpha diploid cells, binds cooperatively with the ALPHA2 protein to a 21-bp DNA sequence termed the haploid-specific gene (hsg) operator, to repress transcription of haploid-specific genes and of MATALPHA1. The polypeptide is Mating-type protein A1 (MATA1) (Saccharomyces cerevisiae (Baker's yeast)).